The sequence spans 733 residues: Phosphoribosylformylglycinamidine synthase subunit PurL (733 aa).

His41 is an active-site residue. Positions 44 and 83 each coordinate ATP. Glu85 lines the Mg(2+) pocket. Substrate-binding positions include 86–89 (SHNH) and Arg108. His87 (proton acceptor) is an active-site residue. Residue Asp109 participates in Mg(2+) binding. The segment at 212 to 232 (GASFASQELSEESEEKRPSVQ) is disordered. Gln232 provides a ligand contact to substrate. A Mg(2+)-binding site is contributed by Asp260. 304 to 306 (ESQ) contributes to the substrate binding site. Positions 488 and 525 each coordinate ATP. Asn526 provides a ligand contact to Mg(2+). Ser528 is a substrate binding site.

The protein belongs to the FGAMS family. Monomer. Part of the FGAM synthase complex composed of 1 PurL, 1 PurQ and 2 PurS subunits.

The protein resides in the cytoplasm. The enzyme catalyses N(2)-formyl-N(1)-(5-phospho-beta-D-ribosyl)glycinamide + L-glutamine + ATP + H2O = 2-formamido-N(1)-(5-O-phospho-beta-D-ribosyl)acetamidine + L-glutamate + ADP + phosphate + H(+). It participates in purine metabolism; IMP biosynthesis via de novo pathway; 5-amino-1-(5-phospho-D-ribosyl)imidazole from N(2)-formyl-N(1)-(5-phospho-D-ribosyl)glycinamide: step 1/2. Its function is as follows. Part of the phosphoribosylformylglycinamidine synthase complex involved in the purines biosynthetic pathway. Catalyzes the ATP-dependent conversion of formylglycinamide ribonucleotide (FGAR) and glutamine to yield formylglycinamidine ribonucleotide (FGAM) and glutamate. The FGAM synthase complex is composed of three subunits. PurQ produces an ammonia molecule by converting glutamine to glutamate. PurL transfers the ammonia molecule to FGAR to form FGAM in an ATP-dependent manner. PurS interacts with PurQ and PurL and is thought to assist in the transfer of the ammonia molecule from PurQ to PurL. The polypeptide is Phosphoribosylformylglycinamidine synthase subunit PurL (Thermoanaerobacter sp. (strain X514)).